We begin with the raw amino-acid sequence, 176 residues long: Lipoprotein signal peptidase (176 aa).

The next 3 membrane-spanning stretches (helical) occupy residues 12-32, 67-87, and 94-114; these read WYWV…WVLT, WQKW…TIWL, and VWRL…NLID. Residues Asp123 and Asp141 contribute to the active site. The helical transmembrane segment at 133 to 153 threads the bilayer; the sequence is HFAAFNIADSAICIGAGLIIL.

This sequence belongs to the peptidase A8 family.

It is found in the cell inner membrane. The enzyme catalyses Release of signal peptides from bacterial membrane prolipoproteins. Hydrolyzes -Xaa-Yaa-Zaa-|-(S,diacylglyceryl)Cys-, in which Xaa is hydrophobic (preferably Leu), and Yaa (Ala or Ser) and Zaa (Gly or Ala) have small, neutral side chains.. It functions in the pathway protein modification; lipoprotein biosynthesis (signal peptide cleavage). This protein specifically catalyzes the removal of signal peptides from prolipoproteins. This chain is Lipoprotein signal peptidase, found in Shewanella sediminis (strain HAW-EB3).